A 545-amino-acid polypeptide reads, in one-letter code: Methionine--tRNA ligase (545 aa).

A 'HIGH' region motif is present at residues Pro13–His23. The Zn(2+) site is built by Cys144, Cys147, Cys157, and Cys160. The 'KMSKS' region signature appears at Lys330–Ser334. Lys333 lines the ATP pocket.

This sequence belongs to the class-I aminoacyl-tRNA synthetase family. MetG type 1 subfamily. As to quaternary structure, monomer. Zn(2+) serves as cofactor.

The protein localises to the cytoplasm. It catalyses the reaction tRNA(Met) + L-methionine + ATP = L-methionyl-tRNA(Met) + AMP + diphosphate. In terms of biological role, is required not only for elongation of protein synthesis but also for the initiation of all mRNA translation through initiator tRNA(fMet) aminoacylation. In Blochmanniella floridana, this protein is Methionine--tRNA ligase.